Here is a 168-residue protein sequence, read N- to C-terminus: uncharacterized protein (168 aa).

The segment at 1 to 52 is disordered; that stretch reads MVLGLASFPESLSSQSETATQPRRPSVKWDLGSDYRKGTEETTASGSNFRRE. Over residues 10–23 the composition is skewed to polar residues; sequence ESLSSQSETATQPR. Basic and acidic residues predominate over residues 31–40; the sequence is LGSDYRKGTE.

This is an uncharacterized protein from Mus musculus (Mouse).